The sequence spans 222 residues: Eukaryotic translation initiation factor 3 subunit K (222 aa).

Residues 46 to 208 form the PCI domain; that stretch reads YDLEANLAVL…KIKTKNITEK (163 aa).

The protein belongs to the eIF-3 subunit K family. Component of the eukaryotic translation initiation factor 3 (eIF-3) complex. The eIF-3 complex interacts with pix.

The protein localises to the cytoplasm. In terms of biological role, component of the eukaryotic translation initiation factor 3 (eIF-3) complex, which is involved in protein synthesis of a specialized repertoire of mRNAs and, together with other initiation factors, stimulates binding of mRNA and methionyl-tRNAi to the 40S ribosome. The eIF-3 complex specifically targets and initiates translation of a subset of mRNAs involved in cell proliferation. In Drosophila persimilis (Fruit fly), this protein is Eukaryotic translation initiation factor 3 subunit K.